We begin with the raw amino-acid sequence, 459 residues long: tRNA modification GTPase MnmE (459 aa).

(6S)-5-formyl-5,6,7,8-tetrahydrofolate is bound by residues Arg23, Glu86, and Arg125. Positions 221-380 (GIDAVIIGKP…LENAITELFV (160 aa)) constitute a TrmE-type G domain. Asn231 serves as a coordination point for K(+). GTP is bound by residues 231 to 236 (NVGKSS), 250 to 256 (TDIPGTT), and 275 to 278 (DTAG). Residue Ser235 participates in Mg(2+) binding. Thr250, Ile252, and Thr255 together coordinate K(+). A Mg(2+)-binding site is contributed by Thr256. Lys459 provides a ligand contact to (6S)-5-formyl-5,6,7,8-tetrahydrofolate.

This sequence belongs to the TRAFAC class TrmE-Era-EngA-EngB-Septin-like GTPase superfamily. TrmE GTPase family. In terms of assembly, homodimer. Heterotetramer of two MnmE and two MnmG subunits. K(+) is required as a cofactor.

Its subcellular location is the cytoplasm. Its function is as follows. Exhibits a very high intrinsic GTPase hydrolysis rate. Involved in the addition of a carboxymethylaminomethyl (cmnm) group at the wobble position (U34) of certain tRNAs, forming tRNA-cmnm(5)s(2)U34. This chain is tRNA modification GTPase MnmE, found in Acetivibrio thermocellus (strain ATCC 27405 / DSM 1237 / JCM 9322 / NBRC 103400 / NCIMB 10682 / NRRL B-4536 / VPI 7372) (Clostridium thermocellum).